The following is a 506-amino-acid chain: UDP-N-acetylmuramoyl-L-alanyl-D-glutamate--2,6-diaminopimelate ligase (506 aa).

UDP-N-acetyl-alpha-D-muramoyl-L-alanyl-D-glutamate is bound at residue Ser42. Gly125 to Thr131 is a binding site for ATP. UDP-N-acetyl-alpha-D-muramoyl-L-alanyl-D-glutamate-binding positions include Thr166–Thr167, Ser193, and Arg201. An N6-carboxylysine modification is found at Lys233. Meso-2,6-diaminopimelate-binding positions include Arg395, Asp419–Arg422, Gly475, and Glu479. Positions Asp419 to Arg422 match the Meso-diaminopimelate recognition motif motif.

It belongs to the MurCDEF family. MurE subfamily. The cofactor is Mg(2+). Post-translationally, carboxylation is probably crucial for Mg(2+) binding and, consequently, for the gamma-phosphate positioning of ATP.

It is found in the cytoplasm. The catalysed reaction is UDP-N-acetyl-alpha-D-muramoyl-L-alanyl-D-glutamate + meso-2,6-diaminopimelate + ATP = UDP-N-acetyl-alpha-D-muramoyl-L-alanyl-gamma-D-glutamyl-meso-2,6-diaminopimelate + ADP + phosphate + H(+). It participates in cell wall biogenesis; peptidoglycan biosynthesis. Functionally, catalyzes the addition of meso-diaminopimelic acid to the nucleotide precursor UDP-N-acetylmuramoyl-L-alanyl-D-glutamate (UMAG) in the biosynthesis of bacterial cell-wall peptidoglycan. The sequence is that of UDP-N-acetylmuramoyl-L-alanyl-D-glutamate--2,6-diaminopimelate ligase from Streptomyces avermitilis (strain ATCC 31267 / DSM 46492 / JCM 5070 / NBRC 14893 / NCIMB 12804 / NRRL 8165 / MA-4680).